An 890-amino-acid chain; its full sequence is Inter-alpha-trypsin inhibitor heavy chain H3 (890 aa).

The first 20 residues, 1–20, serve as a signal peptide directing secretion; sequence MAFAWWPCLILALLSSLAAS. A propeptide spanning residues 21–34 is cleaved from the precursor; the sequence is GFPRSPFRLLGKRS. Residues 29–158 enclose the VIT domain; sequence LLGKRSLPEG…KVTFELTYEE (130 aa). Asparagine 91 is a glycosylation site (N-linked (GlcNAc...) asparagine). Positions 284–467 constitute a VWFA domain; it reads NVAFVIDISG…LQLQGFYEEV (184 aa). Asparagine 580 carries an N-linked (GlcNAc...) asparagine glycan. The residue at position 651 (aspartate 651) is an Aspartate 1-(chondroitin 4-sulfate)-ester. Positions 652–890 are excised as a propeptide; sequence PHFIIQIPEK…HTDYIVPNLF (239 aa).

It belongs to the ITIH family. I-alpha-I plasma protease inhibitors are assembled from one or two heavy chains (HC) and one light chain, bikunin. Pre-alpha-inhibitor (P-alpha-I) is composed of ITIH3/HC3 and bikunin. In terms of processing, heavy chains are linked to bikunin via chondroitin 4-sulfate esterified to the alpha-carboxyl of the C-terminal aspartate after propeptide cleavage.

The protein resides in the secreted. Functionally, may act as a carrier of hyaluronan in serum or as a binding protein between hyaluronan and other matrix protein, including those on cell surfaces in tissues to regulate the localization, synthesis and degradation of hyaluronan which are essential to cells undergoing biological processes. This is Inter-alpha-trypsin inhibitor heavy chain H3 (ITIH3) from Homo sapiens (Human).